The primary structure comprises 1429 residues: Nitric oxide synthase 1 (1429 aa).

Residues 1–200 (MEENTFGVQQ…LQDIGEHDEL (200 aa)) form an interaction with NOSIP region. The PDZ domain occupies 17 to 99 (SVRLFKRKVG…ETHVVLILRG (83 aa)). 3 disordered regions span residues 152-174 (VTGL…SVSQ), 214-255 (GSKA…DNDR), and 271-298 (NNPY…SRCP). The segment covering 160–174 (QHAQGHGQGAGSVSQ) has biased composition (low complexity). The interaction with DYNLL1/PIN stretch occupies residues 163–240 (QGHGQGAGSV…TGIQVDRDLD (78 aa)). Residues 226–243 (AEMKDTGIQVDRDLDGKS) are compositionally biased toward basic and acidic residues. S280 bears the Phosphoserine mark. Positions 280–294 (SPTSGKQSPTKNGSP) are enriched in polar residues. S334 contributes to the (6R)-L-erythro-5,6,7,8-tetrahydrobiopterin binding site. C415 contacts heme b. L-arginine contacts are provided by Q478, W587, Y588, and E592. Residues V677, W678, and F691 each coordinate (6R)-L-erythro-5,6,7,8-tetrahydrobiopterin. A heme b-binding site is contributed by Y706. The interval 725–745 (KRRAIGFKKLAEAVKFSAKLM) is calmodulin-binding. The Flavodoxin-like domain maps to 755–935 (ATILYATETG…AFRTWAKKVF (181 aa)). Positions 761, 762, 763, 765, 766, 807, 808, and 812 each coordinate FMN. S847, S857, and S858 each carry phosphoserine. The FMN site is built by S886, H891, C893, E919, and Q923. The 248-residue stretch at 990–1237 (KRVSAARLLS…VRGAPSFHLP (248 aa)) folds into the FAD-binding FR-type domain. Residue R1010 coordinates NADP(+). 7 residues coordinate FAD: H1032, R1173, Y1174, Y1175, S1176, T1191, and A1193. S1196 provides a ligand contact to NADP(+). Residues Y1197, V1210, C1211, and S1212 each contribute to the FAD site. The NADP(+) site is built by T1251, R1284, S1313, R1314, K1320, Y1322, Q1324, D1357, T1398, and R1400.

It belongs to the NOS family. Homodimer. Interacts with DLG4 (via N-terminal tandem pair of PDZ domains); the interaction possibly being prevented by the association between NOS1 and CAPON. Forms a ternary complex with CAPON and RASD1. Forms a ternary complex with CAPON and SYN1. Interacts with ZDHHC23. Interacts with NOSIP; which may impair its synaptic location. Interacts with HTR4. Interacts with SLC6A4. Interacts with VAC14. Forms a complex with ASL, ASS1 and SLC7A1; the complex regulates cell-autonomous L-arginine synthesis and citrulline recycling while channeling extracellular L-arginine to nitric oxide synthesis pathway. Interacts with DMD; localizes NOS1 to sarcolemma in muscle cells. Interacts with DYNLL1; inhibits the nitric oxide synthase activity. It depends on heme b as a cofactor. FAD is required as a cofactor. The cofactor is FMN. Requires (6R)-L-erythro-5,6,7,8-tetrahydrobiopterin as cofactor. Post-translationally, ubiquitinated; mediated by STUB1/CHIP in the presence of Hsp70 and Hsp40 (in vitro). As to expression, isoform N-NOS-1 is expressed in brain and colorectum. Found in the Auerbach's plexus of the enteric nervous system. Isoform PNNOS is expressed in the penis, urethra, prostate, and skeletal muscle, and coexists with the cerebellar nnos in the pelvic plexus, bladder and liver, and is detectable in the cerebellum.

The protein resides in the cell membrane. The protein localises to the sarcolemma. It is found in the cell projection. It localises to the dendritic spine. It catalyses the reaction 2 L-arginine + 3 NADPH + 4 O2 + H(+) = 2 L-citrulline + 2 nitric oxide + 3 NADP(+) + 4 H2O. Stimulated by calcium/calmodulin. Inhibited by DYNLL1 that prevents the dimerization of the protein. Inhibited by NOSIP. Functionally, produces nitric oxide (NO) which is a messenger molecule with diverse functions throughout the body. In the brain and peripheral nervous system, NO displays many properties of a neurotransmitter. Inhibitory transmitter for non-adrenergic and non-cholinergic nerves in the colorectum. Probably has nitrosylase activity and mediates cysteine S-nitrosylation of cytoplasmic target proteins such SRR. Inhibitory transmitter for non-adrenergic and non-cholinergic nerves in the colorectum. This chain is Nitric oxide synthase 1, found in Rattus norvegicus (Rat).